An 82-amino-acid chain; its full sequence is UPF0298 protein SPCG_0698 (82 aa).

This sequence belongs to the UPF0298 family.

Its subcellular location is the cytoplasm. The protein is UPF0298 protein SPCG_0698 of Streptococcus pneumoniae (strain CGSP14).